We begin with the raw amino-acid sequence, 445 residues long: Disintegrin and metalloproteinase domain-containing protein 18 (445 aa).

In terms of domain architecture, Peptidase M12B spans 1–106 (IYRKHLKYIG…LDMQCLGDLS (106 aa)). The Extracellular segment spans residues 1-409 (IYRKHLKYIG…TKRLSQHADS (409 aa)). 3 disulfides stabilise this stretch: Cys18/Cys101, Cys60/Cys85, and Cys62/Cys67. Residues Asn19 and Asn59 are each glycosylated (N-linked (GlcNAc...) asparagine). N-linked (GlcNAc...) asparagine glycosylation is found at Asn84 and Asn131. The Disintegrin domain occupies 113–202 (QSVCGNGIVE…HCVPDTFALD (90 aa)). A disulfide bond links Cys173 and Cys194. N-linked (GlcNAc...) asparagine glycosylation is found at Asn333 and Asn340. The region spanning 342-376 (TGNDCNAAKKCKGNGICNNFGHCQCFPDYRPPDCN) is the EGF-like domain. Intrachain disulfides connect Cys346-Cys358, Cys352-Cys364, and Cys366-Cys375. A helical transmembrane segment spans residues 410–430 (WVILGFFIFLPFIMTLFLGII). The Cytoplasmic segment spans residues 431–445 (KRNERKIVPQKEQER).

In terms of processing, the prodomain and the metalloprotease-like domain are cleaved during the epididymal maturation of the spermatozoa. Expressed specifically in testis.

It is found in the membrane. Sperm surface membrane protein that may be involved in spermatogenesis and fertilization. This is a non catalytic metalloprotease-like protein. In Rattus norvegicus (Rat), this protein is Disintegrin and metalloproteinase domain-containing protein 18 (Adam18).